Here is an 811-residue protein sequence, read N- to C-terminus: Leucine--tRNA ligase (811 aa).

The 'HIGH' region signature appears at 40–50 (PYPSGRLHMGH). The short motif at 579–583 (KMSKS) is the 'KMSKS' region element. Lysine 582 serves as a coordination point for ATP.

It belongs to the class-I aminoacyl-tRNA synthetase family.

The protein localises to the cytoplasm. The catalysed reaction is tRNA(Leu) + L-leucine + ATP = L-leucyl-tRNA(Leu) + AMP + diphosphate. The protein is Leucine--tRNA ligase of Campylobacter fetus subsp. fetus (strain 82-40).